A 586-amino-acid polypeptide reads, in one-letter code: MIIVNNTLAFKLKNAPHKPGCYLWKDDAGQVLYVGKAKDIFKRVHHYFNPNRSFKTRALVERIADVEYVILKNENDALNLEAKLIKQYKPRFNLVLKENNGYLYFFITASVKPTLELGRRYEFSKNKYFGPFASSKFRLRDIYDLLLKLFPLRKCAPHERGHPCFYYQLKMCMGQCMGEDTPERYQTTVKGIEQFFNHGPEQVLNHLQQQEIKASEQQNFEAARHFLDLQKAVLELVNMQQTAFIKAKQSHDFIGYVFEKNVLAITVFAYVDNQLIGKNQQVFELPQDDEKEVESALVTFIYHYYSTNKIPKTLTVSLSEENLSLLANSLKINVTQPKNGEQKSILQTVIDNARYALNTKWTGFINNLNRAEVHQQLAQLLQVPSIQSLEIIDISFYDKDHVVGAMLRYENGKRMKALSRRYNINIDHKGDTNYMADVVYRRIISSIQTHKQLPLSDLLIVDGGIAQINTVTKVFASFPNVTQPIIIGLAKNTRHQTDHIVLTDNTTINIDKNTPLFAYLTTIQEEVDSFAKHNAFKRVSRARFQNPLLQIEGVGRKTVQILLDNFQTNAKHWSCFFERIITVYSC.

Residues 17-94 (HKPGCYLWKD…IKQYKPRFNL (78 aa)) enclose the GIY-YIG domain. The region spanning 201 to 236 (EQVLNHLQQQEIKASEQQNFEAARHFLDLQKAVLEL) is the UVR domain.

Belongs to the UvrC family. Interacts with UvrB in an incision complex.

The protein localises to the cytoplasm. In terms of biological role, the UvrABC repair system catalyzes the recognition and processing of DNA lesions. UvrC both incises the 5' and 3' sides of the lesion. The N-terminal half is responsible for the 3' incision and the C-terminal half is responsible for the 5' incision. This Mycoplasma pneumoniae (strain ATCC 29342 / M129 / Subtype 1) (Mycoplasmoides pneumoniae) protein is UvrABC system protein C.